The primary structure comprises 1079 residues: Carbamoyl phosphate synthase large chain (1079 aa).

Residues 2–403 (PKSTDIKSIL…SIQKAIRGLE (402 aa)) form a carboxyphosphate synthetic domain region. 12 residues coordinate ATP: R129, R169, G175, G176, E208, L210, E215, G241, I242, H243, Q285, and E299. The region spanning 133–328 (EHSMKKLNLE…IAKIAAKLAI (196 aa)) is the ATP-grasp 1 domain. Positions 285, 299, and 301 each coordinate Mg(2+). Mn(2+)-binding residues include Q285, E299, and N301. An oligomerization domain region spans residues 404 to 553 (VGASGFDSKI…YSTWEDECES (150 aa)). Positions 554-936 (HPSKNNKKII…AFSKSMLGAH (383 aa)) are carbamoyl phosphate synthetic domain. An ATP-grasp 2 domain is found at 679–870 (QKTVNKLRLQ…LAKISVRVMC (192 aa)). R715, Q754, L756, E761, G786, V787, H788, S789, Q829, and E841 together coordinate ATP. Mg(2+) contacts are provided by Q829, E841, and N843. The Mn(2+) site is built by Q829, E841, and N843. One can recognise an MGS-like domain in the interval 937-1079 (TNMKKSGRVL…KKIQLFYTKK (143 aa)). Residues 937 to 1079 (TNMKKSGRVL…KKIQLFYTKK (143 aa)) form an allosteric domain region.

This sequence belongs to the CarB family. As to quaternary structure, composed of two chains; the small (or glutamine) chain promotes the hydrolysis of glutamine to ammonia, which is used by the large (or ammonia) chain to synthesize carbamoyl phosphate. Tetramer of heterodimers (alpha,beta)4. Mg(2+) is required as a cofactor. The cofactor is Mn(2+).

It carries out the reaction hydrogencarbonate + L-glutamine + 2 ATP + H2O = carbamoyl phosphate + L-glutamate + 2 ADP + phosphate + 2 H(+). The catalysed reaction is hydrogencarbonate + NH4(+) + 2 ATP = carbamoyl phosphate + 2 ADP + phosphate + 2 H(+). The protein operates within amino-acid biosynthesis; L-arginine biosynthesis; carbamoyl phosphate from bicarbonate: step 1/1. Its pathway is pyrimidine metabolism; UMP biosynthesis via de novo pathway; (S)-dihydroorotate from bicarbonate: step 1/3. In terms of biological role, large subunit of the glutamine-dependent carbamoyl phosphate synthetase (CPSase). CPSase catalyzes the formation of carbamoyl phosphate from the ammonia moiety of glutamine, carbonate, and phosphate donated by ATP, constituting the first step of 2 biosynthetic pathways, one leading to arginine and/or urea and the other to pyrimidine nucleotides. The large subunit (synthetase) binds the substrates ammonia (free or transferred from glutamine from the small subunit), hydrogencarbonate and ATP and carries out an ATP-coupled ligase reaction, activating hydrogencarbonate by forming carboxy phosphate which reacts with ammonia to form carbamoyl phosphate. This chain is Carbamoyl phosphate synthase large chain, found in Buchnera aphidicola subsp. Acyrthosiphon pisum (strain APS) (Acyrthosiphon pisum symbiotic bacterium).